Here is a 419-residue protein sequence, read N- to C-terminus: S-adenosylmethionine synthase (419 aa).

His15 serves as a coordination point for ATP. Residue Asp17 coordinates Mg(2+). Glu43 contacts K(+). L-methionine contacts are provided by Glu56 and Gln100. A flexible loop region spans residues 100–110; sequence QSPDIAQGVNE. Residues 171 to 173, 248 to 249, Asp257, 263 to 264, Ala280, and Lys284 contribute to the ATP site; these read DGK, KF, and RK. An L-methionine-binding site is contributed by Asp257. Lys288 contributes to the L-methionine binding site.

This sequence belongs to the AdoMet synthase family. In terms of assembly, homotetramer; dimer of dimers. Requires Mg(2+) as cofactor. K(+) is required as a cofactor.

Its subcellular location is the cytoplasm. It catalyses the reaction L-methionine + ATP + H2O = S-adenosyl-L-methionine + phosphate + diphosphate. It functions in the pathway amino-acid biosynthesis; S-adenosyl-L-methionine biosynthesis; S-adenosyl-L-methionine from L-methionine: step 1/1. Functionally, catalyzes the formation of S-adenosylmethionine (AdoMet) from methionine and ATP. The overall synthetic reaction is composed of two sequential steps, AdoMet formation and the subsequent tripolyphosphate hydrolysis which occurs prior to release of AdoMet from the enzyme. This chain is S-adenosylmethionine synthase, found in Prochlorococcus marinus (strain MIT 9303).